A 135-amino-acid chain; its full sequence is ATP synthase epsilon chain (135 aa).

The protein belongs to the ATPase epsilon chain family. As to quaternary structure, F-type ATPases have 2 components, CF(1) - the catalytic core - and CF(0) - the membrane proton channel. CF(1) has five subunits: alpha(3), beta(3), gamma(1), delta(1), epsilon(1). CF(0) has three main subunits: a, b and c.

It localises to the cell inner membrane. Functionally, produces ATP from ADP in the presence of a proton gradient across the membrane. The polypeptide is ATP synthase epsilon chain (Allorhizobium ampelinum (strain ATCC BAA-846 / DSM 112012 / S4) (Agrobacterium vitis (strain S4))).